Reading from the N-terminus, the 141-residue chain is Large ribosomal subunit protein uL11 (141 aa).

This sequence belongs to the universal ribosomal protein uL11 family. Part of the ribosomal stalk of the 50S ribosomal subunit. Interacts with L10 and the large rRNA to form the base of the stalk. L10 forms an elongated spine to which L12 dimers bind in a sequential fashion forming a multimeric L10(L12)X complex. In terms of processing, one or more lysine residues are methylated.

In terms of biological role, forms part of the ribosomal stalk which helps the ribosome interact with GTP-bound translation factors. This Shouchella clausii (strain KSM-K16) (Alkalihalobacillus clausii) protein is Large ribosomal subunit protein uL11.